The sequence spans 24 residues: U1-plectoxin-Pt1e (24 aa).

Cysteines 4 and 18 form a disulfide.

This sequence belongs to the neurotoxin 02 (plectoxin) family. 02 (plectoxin) subfamily. Post-translationally, contains 5 disulfide bonds. Expressed by the venom gland.

Its subcellular location is the secreted. Functionally, potent toxin that may paralyze and/or kill insect pests such as H.virescens (lepidoptera), S.exigua (beet armyworm) and M.sexta (tobacco hornworm). The chain is U1-plectoxin-Pt1e from Plectreurys tristis (Spider).